A 72-amino-acid polypeptide reads, in one-letter code: Small ribosomal subunit protein bS18 (72 aa).

This sequence belongs to the bacterial ribosomal protein bS18 family. Part of the 30S ribosomal subunit. Forms a tight heterodimer with protein bS6.

Binds as a heterodimer with protein bS6 to the central domain of the 16S rRNA, where it helps stabilize the platform of the 30S subunit. This Aquifex aeolicus (strain VF5) protein is Small ribosomal subunit protein bS18.